We begin with the raw amino-acid sequence, 82 residues long: Small ribosomal subunit protein bS16 (82 aa).

The protein belongs to the bacterial ribosomal protein bS16 family.

The protein is Small ribosomal subunit protein bS16 of Vibrio parahaemolyticus serotype O3:K6 (strain RIMD 2210633).